The sequence spans 307 residues: UDP-N-acetylenolpyruvoylglucosamine reductase (307 aa).

The FAD-binding PCMH-type domain maps to 29–197 (RVGGPAEWFA…LSARFRLDPG (169 aa)). Arginine 176 is an active-site residue. Serine 227 functions as the Proton donor in the catalytic mechanism. Glutamate 297 is an active-site residue.

It belongs to the MurB family. The cofactor is FAD.

The protein localises to the cytoplasm. It carries out the reaction UDP-N-acetyl-alpha-D-muramate + NADP(+) = UDP-N-acetyl-3-O-(1-carboxyvinyl)-alpha-D-glucosamine + NADPH + H(+). Its pathway is cell wall biogenesis; peptidoglycan biosynthesis. Its function is as follows. Cell wall formation. The protein is UDP-N-acetylenolpyruvoylglucosamine reductase of Prochlorococcus marinus (strain MIT 9313).